A 98-amino-acid polypeptide reads, in one-letter code: NADH-ubiquinone oxidoreductase chain 4L (98 aa).

3 consecutive transmembrane segments (helical) span residues 2 to 22 (PPIF…TLIF), 29 to 49 (SLLC…LIIL), and 61 to 81 (ILLL…LVMV).

This sequence belongs to the complex I subunit 4L family. Core subunit of respiratory chain NADH dehydrogenase (Complex I) which is composed of 45 different subunits.

The protein localises to the mitochondrion inner membrane. The enzyme catalyses a ubiquinone + NADH + 5 H(+)(in) = a ubiquinol + NAD(+) + 4 H(+)(out). Core subunit of the mitochondrial membrane respiratory chain NADH dehydrogenase (Complex I) which catalyzes electron transfer from NADH through the respiratory chain, using ubiquinone as an electron acceptor. Part of the enzyme membrane arm which is embedded in the lipid bilayer and involved in proton translocation. This chain is NADH-ubiquinone oxidoreductase chain 4L (MT-ND4L), found in Avahi occidentalis (Western woolly lemur).